A 385-amino-acid chain; its full sequence is Probable tRNA sulfurtransferase (385 aa).

One can recognise a THUMP domain in the interval 57 to 160 (DGVIERVKKV…RGNAYVFTDK (104 aa)). Residues 180-181 (ML), 205-206 (YY), R262, G284, and Q293 contribute to the ATP site.

Belongs to the ThiI family.

Its subcellular location is the cytoplasm. The enzyme catalyses [ThiI sulfur-carrier protein]-S-sulfanyl-L-cysteine + a uridine in tRNA + 2 reduced [2Fe-2S]-[ferredoxin] + ATP + H(+) = [ThiI sulfur-carrier protein]-L-cysteine + a 4-thiouridine in tRNA + 2 oxidized [2Fe-2S]-[ferredoxin] + AMP + diphosphate. It catalyses the reaction [ThiS sulfur-carrier protein]-C-terminal Gly-Gly-AMP + S-sulfanyl-L-cysteinyl-[cysteine desulfurase] + AH2 = [ThiS sulfur-carrier protein]-C-terminal-Gly-aminoethanethioate + L-cysteinyl-[cysteine desulfurase] + A + AMP + 2 H(+). Its pathway is cofactor biosynthesis; thiamine diphosphate biosynthesis. Catalyzes the ATP-dependent transfer of a sulfur to tRNA to produce 4-thiouridine in position 8 of tRNAs, which functions as a near-UV photosensor. Also catalyzes the transfer of sulfur to the sulfur carrier protein ThiS, forming ThiS-thiocarboxylate. This is a step in the synthesis of thiazole, in the thiamine biosynthesis pathway. The sulfur is donated as persulfide by IscS. This chain is Probable tRNA sulfurtransferase, found in Clostridium perfringens (strain SM101 / Type A).